Here is a 610-residue protein sequence, read N- to C-terminus: Transducer of Cdc42-dependent actin assembly protein 2 homolog (610 aa).

In terms of domain architecture, F-BAR spans 1 to 267; it reads MIPVSRFFTV…EVGKIDAEGD (267 aa). Residues 283–315 form a disordered region; the sequence is APFEIEDLGDPKNCDSRTNDSADGSGGKLLKSS. A compositionally biased stretch (basic and acidic residues) spans 291 to 302; the sequence is GDPKNCDSRTND. In terms of domain architecture, REM-1 spans 352 to 429; sequence SKPAHVRLSC…IHNLKEFYAM (78 aa). The stretch at 355-385 forms a coiled coil; that stretch reads AHVRLSCLRSKIRDMEKQLEQAIQGREGITR. Disordered stretches follow at residues 436 to 487 and 499 to 519; these read EGQE…SSKN and LISS…RRAE. Positions 437–449 are enriched in basic and acidic residues; that stretch reads GQERSFGGRDTPD. Positions 453 to 464 are enriched in low complexity; sequence SMSGSSTNQSSS. Polar residues predominate over residues 475 to 487; that stretch reads AGNSSSADDSSKN. The span at 501 to 513 shows a compositional bias: low complexity; it reads SSPKTSKSSTPTP. The region spanning 547–610 is the SH3 domain; sequence ETAVTVTALF…VPTSYLQFPQ (64 aa).

Belongs to the FNBP1 family. Interacts (via SH3 domain) with wsp-1 and abi-1. Interacts with cdc-42 and (via SH3 domain) with wve-1.

The protein resides in the cell junction. It localises to the cell membrane. Its subcellular location is the cytoplasmic vesicle. It is found in the cytoplasm. The protein localises to the recycling endosome. Functionally, plays a role in protein trafficking, actin organization and embryonic morphogenesis. Potentially acts as a cdc-42 effector. May play a role in egg laying. Together with toca-1, is required for protein trafficking regulating yolk protein clathrin-mediated endocytosis by oocytes during oogenesis and retrograde recycling and the sorting of recycling endosome cargo proteins such as mig-14. Also, together with toca-2, controls the distribution of actin at cell junctions. This Caenorhabditis elegans protein is Transducer of Cdc42-dependent actin assembly protein 2 homolog.